The sequence spans 521 residues: Cholesterol side-chain cleavage enzyme, mitochondrial (521 aa).

The transit peptide at 1–39 directs the protein to the mitochondrion; it reads MLAKGLPPRSVLVKGCQTFLSAPREGLGRLRVPTGEGAG. A heme-binding site is contributed by cysteine 462.

The protein belongs to the cytochrome P450 family. As to quaternary structure, interacts with FDX1/adrenodoxin. Requires heme as cofactor.

The protein localises to the mitochondrion inner membrane. The catalysed reaction is 6 reduced [adrenodoxin] + cholesterol + 3 O2 + 6 H(+) = 4-methylpentanal + pregnenolone + 6 oxidized [adrenodoxin] + 4 H2O. The enzyme catalyses 2 reduced [adrenodoxin] + cholesterol + O2 + 2 H(+) = (22R)-hydroxycholesterol + 2 oxidized [adrenodoxin] + H2O. It catalyses the reaction (22R)-hydroxycholesterol + 2 reduced [adrenodoxin] + O2 + 2 H(+) = (20R,22R)-20,22-dihydroxycholesterol + 2 oxidized [adrenodoxin] + H2O. It carries out the reaction (20R,22R)-20,22-dihydroxycholesterol + 2 reduced [adrenodoxin] + O2 + 2 H(+) = 4-methylpentanal + pregnenolone + 2 oxidized [adrenodoxin] + 2 H2O. Its pathway is lipid metabolism; C21-steroid hormone metabolism. It participates in steroid metabolism; cholesterol metabolism. Its function is as follows. A cytochrome P450 monooxygenase that catalyzes the side-chain hydroxylation and cleavage of cholesterol to pregnenolone, the precursor of most steroid hormones. Catalyzes three sequential oxidation reactions of cholesterol, namely the hydroxylation at C22 followed with the hydroxylation at C20 to yield 20R,22R-hydroxycholesterol that is further cleaved between C20 and C22 to yield the C21-steroid pregnenolone and 4-methylpentanal. Mechanistically, uses molecular oxygen inserting one oxygen atom into a substrate and reducing the second into a water molecule. Two electrons are provided by NADPH via a two-protein mitochondrial transfer system comprising flavoprotein FDXR (adrenodoxin/ferredoxin reductase) and nonheme iron-sulfur protein FDX1 or FDX2 (adrenodoxin/ferredoxin). This is Cholesterol side-chain cleavage enzyme, mitochondrial from Homo sapiens (Human).